The primary structure comprises 269 residues: MGSLANNIMVVGAVLAALVAGGSCGPPKVPPGPNITTNYNGKWLTARATWYGQPNGAGAPDNGGACGIKNVNLPPYSGMTACGNVPIFKDGKGCGSCYEVRCKEKPECSGNPVTVYITDMNYEPIAPYHFDLSGKAFGSLAKPGLNDKIRHCGIMDVEFRRVRCKYPAGQKIVFHIEKGCNPNYLAVLVKYVADDGDIVLMEIQDKLSAEWKPMKLSWGAIWRMDTAKALKGPFSIRLTSESGKKVIAKDVIPANWRPDAVYTSNVQFY.

Residues 1 to 24 (MGSLANNIMVVGAVLAALVAGGSC) form the signal peptide. Asn-34 carries N-linked (GlcNAc...) asparagine glycosylation. The region spanning 63–169 (GGACGIKNVN…RRVRCKYPAG (107 aa)) is the Expansin-like EG45 domain. Cystine bridges form between Cys-66–Cys-94, Cys-97–Cys-164, and Cys-102–Cys-108. In terms of domain architecture, Expansin-like CBD spans 183-264 (NYLAVLVKYV…NWRPDAVYTS (82 aa)).

It belongs to the expansin family. Expansin B subfamily. As to expression, expressed in anthers and pollen.

Its subcellular location is the secreted. The protein resides in the cell wall. It is found in the membrane. May aid fertilization by loosening the cell wall of the stigma and style, thereby facilitating penetration of the pollen tube. Acts selectively on grass cell walls, which are relatively poor in pectins and xyloglucans and rich in glucuronoarabinoxylans and (1-3),(1-4)-beta-D-glucans, when compared with cell walls of other angiosperms, including other monocots. In Zea mays (Maize), this protein is Expansin-B1 (EXPB1).